Here is a 384-residue protein sequence, read N- to C-terminus: Kinesin-like protein KIF25 (384 aa).

The interval 1–20 (MTWTSGQLQREKQARPGSGA) is disordered. Positions 7-363 (QLQREKQARP…LGFGIRARQV (357 aa)) constitute a Kinesin motor domain. 65–72 (GQTGSGKS) contributes to the ATP binding site. 2 disordered regions span residues 217–256 (DQAC…NPAG) and 362–384 (QVQR…RRPD).

The protein belongs to the TRAFAC class myosin-kinesin ATPase superfamily. Kinesin family. Homotetramer.

The protein resides in the cytoplasm. Its subcellular location is the cytoskeleton. It localises to the microtubule organizing center. The protein localises to the centrosome. In terms of biological role, minus-end microtubule-dependent motor protein. Acts as a negative regulator of centrosome separation required to prevent premature centrosome separation during interphase. Required to maintain a centered nucleus to ensure that the spindle is stably oriented at the onset of mitosis. May also act as a negative regulator of amino acid starvation-induced autophagy. The sequence is that of Kinesin-like protein KIF25 from Homo sapiens (Human).